The chain runs to 414 residues: Acetate kinase (414 aa).

Asn7 is a binding site for Mg(2+). Lys14 is a binding site for ATP. Arg99 contacts substrate. The active-site Proton donor/acceptor is Asp157. ATP-binding positions include 217 to 221 and 341 to 345; these read HLGNG and GIGEN. Glu395 provides a ligand contact to Mg(2+).

The protein belongs to the acetokinase family. As to quaternary structure, homodimer. The cofactor is Mg(2+). Mn(2+) serves as cofactor.

It is found in the cytoplasm. The enzyme catalyses acetate + ATP = acetyl phosphate + ADP. Its pathway is metabolic intermediate biosynthesis; acetyl-CoA biosynthesis; acetyl-CoA from acetate: step 1/2. In terms of biological role, catalyzes the formation of acetyl phosphate from acetate and ATP. Can also catalyze the reverse reaction. This chain is Acetate kinase, found in Solibacter usitatus (strain Ellin6076).